The chain runs to 375 residues: Membrane progesterone receptor epsilon (375 aa).

Residues 1–39 (MPRRLQQRGAGVKGPPASTSRRSHPASASAPRSPPAATT) are disordered. Over 1 to 84 (MPRRLQQRGA…VLKPTNETLN (84 aa)) the chain is Cytoplasmic. The segment covering 15–39 (PPASTSRRSHPASASAPRSPPAATT) has biased composition (low complexity). A helical transmembrane segment spans residues 85 to 105 (FWTHFIPLLLFLSKFCRLFFL). Residues 106–114 (GGSDVPFHH) lie on the Extracellular side of the membrane. Residues 115–135 (PWLLPLWCYASGVLLTFAMSC) form a helical membrane-spanning segment. Topologically, residues 136 to 160 (TAHVFSCLSLRLRAAFFYLDYASIS) are cytoplasmic. Residues 161-181 (YYGFGSTVAYYYYLLPSLSLL) traverse the membrane as a helical segment. Topologically, residues 182 to 203 (DARVMTPYVQQRLGWHVDCTRL) are extracellular. The helical transmembrane segment at 204 to 224 (IAVYRALVLPVAFVLAVACTV) threads the bilayer. Residues 225–241 (ACCKSRTDWCSYPFALR) are Cytoplasmic-facing. Residues 242–262 (TFVFVMPLSMACPIMLESWLF) form a helical membrane-spanning segment. At 263-299 (DLRGENPTLFVHFYRRYFWLVVAAFFNVSKIPERIQP) the chain is on the extracellular side. The chain crosses the membrane as a helical span at residues 300–320 (GLFDIIGHSHQLFHIFTFLSI). Over 321-341 (YDQVYYVEEGLRQFLQAPPAA) the chain is Cytoplasmic. A helical transmembrane segment spans residues 342 to 362 (PTFSGTVGYMLLLVVCLGLVI). Residues 363–375 (RKFLNSTEFCSKK) lie on the Extracellular side of the membrane.

It belongs to the ADIPOR family. As to quaternary structure, homodimer.

The protein localises to the cell membrane. Its function is as follows. Plasma membrane progesterone (P4) receptor coupled to G proteins. Seems to act through a G(s) mediated pathway. May be involved in regulating rapid P4 signaling in the nervous system. Also binds dehydroepiandrosterone (DHEA), pregnanolone, pregnenolone and allopregnanolone. This Mus musculus (Mouse) protein is Membrane progesterone receptor epsilon.